Reading from the N-terminus, the 240-residue chain is Extracellular superoxide dismutase [Cu-Zn] (240 aa).

Residues Met-1–Ala-18 form the signal peptide. 2 cysteine pairs are disulfide-bonded: Cys-63/Cys-208 and Cys-125/Cys-207. Asn-107 is a glycosylation site (N-linked (GlcNAc...) asparagine). Positions 114, 116, and 131 each coordinate Cu cation. Residues His-131, His-139, His-142, and Asp-145 each coordinate Zn(2+). His-181 contributes to the Cu cation binding site. Residues Lys-229 and Lys-230 are each glycosylated (N-linked (Glc) (glycation) lysine; in vitro).

Belongs to the Cu-Zn superoxide dismutase family. In terms of assembly, homotetramer. Directly interacts with ATP7A; this interaction is copper-dependent and is required for SOD3 activity. Cu cation serves as cofactor. Requires Zn(2+) as cofactor. In terms of tissue distribution, expressed in blood vessels, heart, lung, kidney and placenta. Major SOD isoenzyme in extracellular fluids such as plasma, lymph and synovial fluid.

The protein localises to the secreted. Its subcellular location is the extracellular space. It localises to the golgi apparatus. The protein resides in the trans-Golgi network. The enzyme catalyses 2 superoxide + 2 H(+) = H2O2 + O2. In terms of biological role, protect the extracellular space from toxic effect of reactive oxygen intermediates by converting superoxide radicals into hydrogen peroxide and oxygen. The sequence is that of Extracellular superoxide dismutase [Cu-Zn] (SOD3) from Homo sapiens (Human).